The primary structure comprises 267 residues: Ribosomal RNA large subunit methyltransferase E (267 aa).

S-adenosyl-L-methionine contacts are provided by Gly50, Trp52, Asp68, Asp84, and Asp109. The active-site Proton acceptor is Lys149. The region spanning 196–255 (PLKIDDKFDVTIKKIGAKGNGIAFVEDFVVFMQDEVKKGENVRIKIVDVKPEFAFAIVIG) is the TRAM domain.

This sequence belongs to the class I-like SAM-binding methyltransferase superfamily. RNA methyltransferase RlmE family.

The protein resides in the cytoplasm. The enzyme catalyses uridine(2552) in 23S rRNA + S-adenosyl-L-methionine = 2'-O-methyluridine(2552) in 23S rRNA + S-adenosyl-L-homocysteine + H(+). Specifically methylates the uridine in position 2552 of 23S rRNA at the 2'-O position of the ribose in the fully assembled 50S ribosomal subunit. The polypeptide is Ribosomal RNA large subunit methyltransferase E (Methanococcoides burtonii (strain DSM 6242 / NBRC 107633 / OCM 468 / ACE-M)).